A 405-amino-acid chain; its full sequence is MAAFEYLALDPSGRQQKGVLEADSARQVRQLLRERQLAPLDVKPTRTREQSGQGGRLTFARGLSARDLALVTRQLATLVQAALPIEEALRAAAAQSTSQRIQSMLLAVRAKVLEGHSLAGSLREFPTAFPELYRATVAAGEHAGHLGPVLEQLADYTEQRQQSRQKIQLALLYPVILMVASLAIVGFLLGYVVPDVVRVFIDSGQTLPLLTRVLIGVSDWVKAWGALAFVAAIGGVIGFRYALRKDAFRERWHGFLLRVPLVGRLVRSTDTARFASTLAILTRSGVPLVEALAIAAEVIANRIIRNEVVKAAQKVREGASLTRSLEATGQFPPMMLHMIASGERSGELDQMLARTARNQENDLAAQIGLMVGLFEPFMLIFMGAVVLVIVLAILLPILSLNQLVG.

The Cytoplasmic segment spans residues 1 to 168 (MAAFEYLALD…QRQQSRQKIQ (168 aa)). 3 residues coordinate Ca(2+): T97, E151, and D155. A helical membrane pass occupies residues 169–189 (LALLYPVILMVASLAIVGFLL). The Periplasmic segment spans residues 190-219 (GYVVPDVVRVFIDSGQTLPLLTRVLIGVSD). A helical membrane pass occupies residues 220–239 (WVKAWGALAFVAAIGGVIGF). At 240–376 (RYALRKDAFR…IGLMVGLFEP (137 aa)) the chain is on the cytoplasmic side. The chain crosses the membrane as a helical span at residues 377-397 (FMLIFMGAVVLVIVLAILLPI). Topologically, residues 398–405 (LSLNQLVG) are periplasmic.

This sequence belongs to the GSP F family. In terms of assembly, type II secretion system is composed of four main components: the outer membrane complex, the inner membrane complex, the cytoplasmic secretion ATPase and the periplasm-spanning pseudopilus. Homodimer. Interacts with XcpR/GspE and XcpY/GspL components.

It is found in the cell inner membrane. In terms of biological role, component of the type II secretion system inner membrane complex required for the energy-dependent secretion of extracellular factors such as proteases and toxins from the periplasm. The chain is Type II secretion system protein F (xcpS) from Pseudomonas aeruginosa (strain ATCC 15692 / DSM 22644 / CIP 104116 / JCM 14847 / LMG 12228 / 1C / PRS 101 / PAO1).